A 177-amino-acid chain; its full sequence is Chorismate pyruvate-lyase (177 aa).

Substrate is bound by residues Met36, Arg78, Leu116, and Glu157.

This sequence belongs to the UbiC family. In terms of assembly, monomer.

It localises to the cytoplasm. The catalysed reaction is chorismate = 4-hydroxybenzoate + pyruvate. Its pathway is cofactor biosynthesis; ubiquinone biosynthesis. Its function is as follows. Removes the pyruvyl group from chorismate, with concomitant aromatization of the ring, to provide 4-hydroxybenzoate (4HB) for the ubiquinone pathway. The chain is Chorismate pyruvate-lyase from Pectobacterium atrosepticum (strain SCRI 1043 / ATCC BAA-672) (Erwinia carotovora subsp. atroseptica).